A 534-amino-acid polypeptide reads, in one-letter code: Major facilitator-type transporter sor6 (534 aa).

Asparagine 29 and asparagine 36 each carry an N-linked (GlcNAc...) asparagine glycan. A run of 12 helical transmembrane segments spans residues 66–86 (WFLTSIVTFSVFAVTFTSSAY), 103–123 (LFITGVSVFVLGFAIGPAVWG), 160–180 (AMVAFMAGSAGSPNIATLIVL), 182–202 (FLAGTFGGSPLVNSGGAIADL), 209–229 (GLAMTIYCVAPFLGPILGPIV), 241–261 (WVQGMCTIFIGVIGIIGVIFV), 318–338 (IVLIASLYMAIIYGTVYMFLG), 354–374 (FGGLAFLGMMVGIIIGLGYAI), 395–415 (LPPAIAGAVALPIGMFAFAWT), 424–444 (VSIVLSAPFGFGVVLVILPIV), 456–476 (ASVLAAAAVFRSIMGAVFPLF), and 486–506 (IHWATSIPAFLTLVCMPFPFF).

Belongs to the major facilitator superfamily. Sugar transporter (TC 2.A.1.1) family.

The protein resides in the membrane. Major facilitator-type transporter; part of the gene cluster that mediates the biosynthesis of sorbicillinoids, a diverse group of yellow secondary metabolites that restrict growth of competing pathogenic fungi but not of bacteria. This chain is Major facilitator-type transporter sor6, found in Hypocrea jecorina (strain QM6a) (Trichoderma reesei).